Here is a 240-residue protein sequence, read N- to C-terminus: UDP-2,3-diacylglucosamine hydrolase (240 aa).

Residues Asp8, His10, Asp41, Asn79, and His114 each coordinate Mn(2+). Substrate is bound at residue 79-80 (NR). Positions 122, 160, 164, 167, and 195 each coordinate substrate. Mn(2+) contacts are provided by His195 and His197.

The protein belongs to the LpxH family. Mn(2+) serves as cofactor.

The protein localises to the cell inner membrane. It carries out the reaction UDP-2-N,3-O-bis[(3R)-3-hydroxytetradecanoyl]-alpha-D-glucosamine + H2O = 2-N,3-O-bis[(3R)-3-hydroxytetradecanoyl]-alpha-D-glucosaminyl 1-phosphate + UMP + 2 H(+). The protein operates within glycolipid biosynthesis; lipid IV(A) biosynthesis; lipid IV(A) from (3R)-3-hydroxytetradecanoyl-[acyl-carrier-protein] and UDP-N-acetyl-alpha-D-glucosamine: step 4/6. Its function is as follows. Hydrolyzes the pyrophosphate bond of UDP-2,3-diacylglucosamine to yield 2,3-diacylglucosamine 1-phosphate (lipid X) and UMP by catalyzing the attack of water at the alpha-P atom. Involved in the biosynthesis of lipid A, a phosphorylated glycolipid that anchors the lipopolysaccharide to the outer membrane of the cell. The polypeptide is UDP-2,3-diacylglucosamine hydrolase (Salmonella schwarzengrund (strain CVM19633)).